A 268-amino-acid polypeptide reads, in one-letter code: Protein MGF 300-1L (268 aa).

Topologically, residues 1–175 are cytoplasmic; that stretch reads MVSLTTCCLK…QTFKTFYAKN (175 aa). Residues 176–193 traverse the membrane as a helical segment; the sequence is YSLSTLYCIFLAIYYKLY. At 194 to 268 the chain is on the extracellular side; it reads TALRKMVKIY…MYAFSQNDYW (75 aa).

This sequence belongs to the asfivirus MGF 300 family.

Its subcellular location is the host membrane. Functionally, plays a role in virus cell tropism, and may be required for efficient virus replication in macrophages. The chain is Protein MGF 300-1L from Ornithodoros (relapsing fever ticks).